Consider the following 878-residue polypeptide: Alanine--tRNA ligase (878 aa).

Zn(2+)-binding residues include H566, H570, C668, and H672. Residues 846 to 866 are disordered; the sequence is GGGRPDMAQAGGKQPEKLEEA.

It belongs to the class-II aminoacyl-tRNA synthetase family. Zn(2+) is required as a cofactor.

The protein localises to the cytoplasm. The catalysed reaction is tRNA(Ala) + L-alanine + ATP = L-alanyl-tRNA(Ala) + AMP + diphosphate. Functionally, catalyzes the attachment of alanine to tRNA(Ala) in a two-step reaction: alanine is first activated by ATP to form Ala-AMP and then transferred to the acceptor end of tRNA(Ala). Also edits incorrectly charged Ser-tRNA(Ala) and Gly-tRNA(Ala) via its editing domain. This Bacillus pumilus (strain SAFR-032) protein is Alanine--tRNA ligase.